A 432-amino-acid polypeptide reads, in one-letter code: Monooxygenase penA (432 aa).

Residues 7–29 (FKIAIIGAGPAGLTLASLLTASP) form a helical membrane-spanning segment. N-linked (GlcNAc...) asparagine glycosylation is present at asparagine 33.

The protein belongs to the aromatic-ring hydroxylase family. The cofactor is FAD.

It is found in the membrane. Its pathway is secondary metabolite biosynthesis. The protein operates within alkaloid biosynthesis. It functions in the pathway mycotoxin biosynthesis. Monooxygenase; part of the gene cluster that mediates the biosynthesis of penigequinolones, potent insecticidal alkaloids that contain a highly modified 10-carbon prenyl group. The first stage is catalyzed by the nonribosomal peptide synthetase penN that condenses anthranilic acid and O-methyl-L-tyrosine to produce 4'-methoxycyclopeptin. 4'-methoxycyclopeptin is then converted to 4'-methoxydehydrocyclopeptin by the ketoglutarate-dependent dioxygenase penM through dehydrogenation to form a double bond between C-alpha and C-beta of the O-methyltyrosine side chain. PenM also converts its first product methoxydehydrocyclopeptin to 4'-methoxycyclopenin. The following conversion of 4'methoxycyclopenin into 4'-methoxyviridicatin is catalyzed by the cyclopenase penL. 4'-methoxyviridicatin is the precursor of quinolone natural products, and is further converted to quinolinone B. The prenyltransferase penI then catalyzes the canonical Friedel-Crafts alkylation of quinolinone B with dimethylallyl cation to yield dimethylallyl quinolone, which is subjected to FAD-dependent dehydrogenation by the FAD-linked oxidoreductase penH to yield conjugated aryl diene. The delta(3') double bond then serves as the site of the second alkylation with DMAPP catalyzed by the prenyltransferase penG to yield a carbenium ion intermediate, which can be attacked by H(2)O to yield a styrenyl quinolone containing a C3'-hydroxyprenyl chain, or undergo cyclization to yield yaequinolones J1 and J2. The conversion of the styrenyl quinolone into the tetrahydrofuran-containing yaequinolone C is performed by the FAD-dependent monooxygenase penE and involves epoxidation of the terminal C7'-C8' olefin, followed by epoxide ring opening initiated by the C3' hydroxyl group. The predicted cysteine hydrolase penJ acts as an epoxide hydrolase that enhances the rate of the 5-exo-tet cyclization step, increasing the yield of yaequinolone C. PenF catalyzes the cationic rearrangement of the epoxide formed by penE (before ring opening to produce yaequinolone C) into yaequinolone D. Finally, the short-chain dehydrogenase/reductase (SDR)-like reductase penD, catalyzes both the dehydration of yaequinolone D and the reduction of the resulting oxonium to yield penigequinolone. This is Monooxygenase penA from Penicillium thymicola.